The sequence spans 555 residues: Potassium-transporting ATPase potassium-binding subunit (555 aa).

The next 10 membrane-spanning stretches (helical) occupy residues 2–22 (IWVA…PTGI), 60–80 (QYAL…YFIF), 130–150 (IGIT…VMAF), 173–193 (VFLP…VPQT), 246–266 (MSNI…PFTY), 278–298 (ILFV…TTSE), 374–394 (AGFV…GLMV), 412–432 (LIAV…ALAL), 483–503 (LVMF…AASL), and 525–545 (GIFI…MLVL).

Belongs to the KdpA family. In terms of assembly, the system is composed of three essential subunits: KdpA, KdpB and KdpC.

The protein localises to the cell membrane. Its function is as follows. Part of the high-affinity ATP-driven potassium transport (or Kdp) system, which catalyzes the hydrolysis of ATP coupled with the electrogenic transport of potassium into the cytoplasm. This subunit binds the extracellular potassium ions and delivers the ions to the membrane domain of KdpB through an intramembrane tunnel. This chain is Potassium-transporting ATPase potassium-binding subunit, found in Bacillus cereus (strain AH187).